Consider the following 325-residue polypeptide: Heat-inducible transcription repressor HrcA (325 aa).

It belongs to the HrcA family.

In terms of biological role, negative regulator of class I heat shock genes (grpE-dnaK-dnaJ and groELS operons). Prevents heat-shock induction of these operons. The sequence is that of Heat-inducible transcription repressor HrcA from Staphylococcus aureus (strain JH1).